We begin with the raw amino-acid sequence, 451 residues long: Cyclin-dependent kinase 18 (451 aa).

5 positions are modified to phosphoserine: S12, S51, S66, S75, and S109. A Protein kinase domain is found at Y121–F402. Residues L127–V135 and K150 each bind ATP. D242 (proton acceptor) is an active-site residue. A phosphoserine mark is found at S417 and S420.

Belongs to the protein kinase superfamily. CMGC Ser/Thr protein kinase family. CDC2/CDKX subfamily. In brain, kidney, intestine and at a much lower level, in fetal tissues.

It catalyses the reaction L-seryl-[protein] + ATP = O-phospho-L-seryl-[protein] + ADP + H(+). The catalysed reaction is L-threonyl-[protein] + ATP = O-phospho-L-threonyl-[protein] + ADP + H(+). Functionally, may play a role in signal transduction cascades in terminally differentiated cells. The protein is Cyclin-dependent kinase 18 (Cdk18) of Mus musculus (Mouse).